The primary structure comprises 410 residues: Tryptophan synthase beta chain (410 aa).

Lys104 carries the post-translational modification N6-(pyridoxal phosphate)lysine.

The protein belongs to the TrpB family. In terms of assembly, tetramer of two alpha and two beta chains. Pyridoxal 5'-phosphate serves as cofactor.

It carries out the reaction (1S,2R)-1-C-(indol-3-yl)glycerol 3-phosphate + L-serine = D-glyceraldehyde 3-phosphate + L-tryptophan + H2O. Its pathway is amino-acid biosynthesis; L-tryptophan biosynthesis; L-tryptophan from chorismate: step 5/5. Functionally, the beta subunit is responsible for the synthesis of L-tryptophan from indole and L-serine. In Thermosynechococcus vestitus (strain NIES-2133 / IAM M-273 / BP-1), this protein is Tryptophan synthase beta chain.